We begin with the raw amino-acid sequence, 275 residues long: MTQALQALIDQAWEDRTSLSPKSAPNDIREAVANVISQLDSGALRVAEKQGKDWIVNQWIKKAVLLSFRLEDNAPMSAGGFAQFYDKVPTKFANWSADDFAKAGFRVVPPAVARRGSFIAKNAVLMPSYVNIGAYVDEGTMVDTWATVGSCAQIGKNVHLSGGVGIGGVLEPLQANPVIIEDNCFIGARSEVVEGVIVEENSVISMGVYLGQSTKIYDRETGEIHYGRVPAGSVVVAGNLPSKDGKYSLYCAVIVKKVDAQTRAKTSLNDLLRGD.

Substrate-binding residues include Arg-106 and Asp-143.

Belongs to the transferase hexapeptide repeat family. Homotrimer.

Its subcellular location is the cytoplasm. The enzyme catalyses (S)-2,3,4,5-tetrahydrodipicolinate + succinyl-CoA + H2O = (S)-2-succinylamino-6-oxoheptanedioate + CoA. It functions in the pathway amino-acid biosynthesis; L-lysine biosynthesis via DAP pathway; LL-2,6-diaminopimelate from (S)-tetrahydrodipicolinate (succinylase route): step 1/3. This chain is 2,3,4,5-tetrahydropyridine-2,6-dicarboxylate N-succinyltransferase, found in Cupriavidus necator (strain ATCC 17699 / DSM 428 / KCTC 22496 / NCIMB 10442 / H16 / Stanier 337) (Ralstonia eutropha).